Here is a 574-residue protein sequence, read N- to C-terminus: Eukaryotic translation initiation factor 3 subunit D (574 aa).

A disordered region spans residues 153–178 (QRRGGNARQGQRGQGGRFGGDRPKER). Positions 154-163 (RRGGNARQGQ) are enriched in low complexity. Residues 312–326 (PVETLTVSETSAEPP) are RNA gate. Residues 555-574 (EGTFDSERESSEEENSDDDQ) are disordered. The segment covering 564–574 (SSEEENSDDDQ) has biased composition (acidic residues).

This sequence belongs to the eIF-3 subunit D family. As to quaternary structure, component of the eukaryotic translation initiation factor 3 (eIF-3) complex.

It is found in the cytoplasm. Its function is as follows. mRNA cap-binding component of the eukaryotic translation initiation factor 3 (eIF-3) complex, which is involved in protein synthesis of a specialized repertoire of mRNAs and, together with other initiation factors, stimulates binding of mRNA and methionyl-tRNAi to the 40S ribosome. The eIF-3 complex specifically targets and initiates translation of a subset of mRNAs involved in cell proliferation. In the eIF-3 complex, eif3d specifically recognizes and binds the 7-methylguanosine cap of a subset of mRNAs. In Caenorhabditis briggsae, this protein is Eukaryotic translation initiation factor 3 subunit D.